Here is a 285-residue protein sequence, read N- to C-terminus: Putative hydrolase DDAH2 (285 aa).

The active-site Proton donor is H171. The active-site Nucleophile is the C276.

Belongs to the DDAH family. Post-translationally, phosphorylated by TBK1. Phosphorylation inhibits the translocation into the mitochondrion upon Sendai viral infection. As to expression, detected in heart, placenta, lung, liver, skeletal muscle, kidney and pancreas, and at very low levels in brain.

The protein localises to the cytoplasm. The protein resides in the mitochondrion. Putative hydrolase with unknown substrate. Does not hydrolyze N(G),N(G)-dimethyl-L-arginine (ADMA) which acts as an inhibitor of NOS. In endothelial cells, induces expression of vascular endothelial growth factor (VEGF) via phosphorylation of the transcription factor SP1 by PKA in a process that is independent of NO and NO synthase. Similarly, enhances pancreatic insulin secretion through SP1-mediated transcriptional up-regulation of secretagogin/SCGN, an insulin vesicle docking protein. Upon viral infection, relocates to mitochondria where it promotes mitochondrial fission through activation of DNM1L leading to the inhibition of innate response activation mediated by MAVS. The sequence is that of Putative hydrolase DDAH2 from Homo sapiens (Human).